Reading from the N-terminus, the 537-residue chain is Protoporphyrinogen oxidase 1, chloroplastic (537 aa).

The transit peptide at 1 to 34 (MELSLLRPTTQSLLPSFSKPNLRLNVYKPLRLRC) directs the protein to the chloroplast. Ser35 carries the N-acetylserine modification. Residues 63–68 (GGGISG), 90–91 (EA), and 112–115 (GPNS) each bind FAD. The segment covering 256–268 (RKNAPKAERDPRL) has biased composition (basic and acidic residues). The interval 256 to 275 (RKNAPKAERDPRLPKPQGQT) is disordered. Residue 511-513 (VAL) participates in FAD binding.

Belongs to the protoporphyrinogen/coproporphyrinogen oxidase family. Protoporphyrinogen oxidase subfamily. FAD serves as cofactor. In terms of tissue distribution, expressed at high levels in the leaves and at low levels in the roots and floral buds.

Its subcellular location is the plastid. The protein resides in the chloroplast. It carries out the reaction protoporphyrinogen IX + 3 O2 = protoporphyrin IX + 3 H2O2. The protein operates within porphyrin-containing compound metabolism; protoporphyrin-IX biosynthesis; protoporphyrin-IX from protoporphyrinogen-IX: step 1/1. Its pathway is porphyrin-containing compound metabolism; chlorophyll biosynthesis. Inhibited by acifluorfen. In terms of biological role, catalyzes the 6-electron oxidation of protoporphyrinogen-IX to form protoporphyrin-IX. This Arabidopsis thaliana (Mouse-ear cress) protein is Protoporphyrinogen oxidase 1, chloroplastic (PPOX1).